We begin with the raw amino-acid sequence, 102 residues long: Protein Tat (102 aa).

Residues 1-10 (MEPVDPRLEP) are compositionally biased toward basic and acidic residues. Positions 1–20 (MEPVDPRLEPWNHPGSQPKT) are disordered. The tract at residues 1 to 24 (MEPVDPRLEPWNHPGSQPKTACNK) is interaction with human CREBBP. The transactivation stretch occupies residues 1 to 48 (MEPVDPRLEPWNHPGSQPKTACNKCYCKKCCYHCMCCFTKKGLGISYG). 3 residues coordinate Zn(2+): Cys22, Cys25, and Cys27. A cysteine-rich region spans residues 22–37 (CNKCYCKKCCYHCMCC). An N6-acetyllysine; by host PCAF modification is found at Lys28. Zn(2+) is bound by residues Cys30, His33, Cys34, and Cys37. The core stretch occupies residues 38–48 (FTKKGLGISYG). The tract at residues 47–102 (YGRKKRSQRRRPPKSSKDHQDPIPEQPLSRQQPGDQTGQKKQKKALEGKTEADPCD) is disordered. The segment covering 48 to 60 (GRKKRSQRRRPPK) has biased composition (basic residues). A Nuclear localization signal, RNA-binding (TAR), and protein transduction motif is present at residues 49–57 (RKKRSQRRR). The tract at residues 49-87 (RKKRSQRRRPPKSSKDHQDPIPEQPLSRQQPGDQTGQKK) is interaction with the host capping enzyme RNGTT. Lys50 and Lys51 each carry N6-acetyllysine; by host EP300 and GCN5L2. Arg52 bears the Asymmetric dimethylarginine; by host PRMT6 mark. Residues 74–85 (LSRQQPGDQTGQ) show a composition bias toward polar residues. A compositionally biased stretch (basic and acidic residues) spans 90–102 (KALEGKTEADPCD).

This sequence belongs to the lentiviruses Tat family. In terms of assembly, interacts with host CCNT1. Associates with the P-TEFb complex composed at least of Tat, P-TEFb (CDK9 and CCNT1), TAR RNA, RNA Pol II. Recruits the HATs CREBBP, TAF1/TFIID, EP300, PCAF and GCN5L2. Interacts with host KAT5/Tip60; this interaction targets the latter to degradation. Interacts with the host deacetylase SIRT1. Interacts with host capping enzyme RNGTT; this interaction stimulates RNGTT. Binds to host KDR, and to the host integrins ITGAV/ITGB3 and ITGA5/ITGB1. Interacts with host KPNB1/importin beta-1 without previous binding to KPNA1/importin alpha-1. Interacts with EIF2AK2. Interacts with host nucleosome assembly protein NAP1L1; this interaction may be required for the transport of Tat within the nucleus, since the two proteins interact at the nuclear rim. Interacts with host C1QBP/SF2P32; this interaction involves lysine-acetylated Tat. Interacts with the host chemokine receptors CCR2, CCR3 and CXCR4. Interacts with host DPP4/CD26; this interaction may trigger an anti-proliferative effect. Interacts with host LDLR. Interacts with the host extracellular matrix metalloproteinase MMP1. Interacts with host PRMT6; this interaction mediates Tat's methylation. Interacts with, and is ubiquitinated by MDM2/Hdm2. Interacts with host PSMC3 and HTATIP2. Interacts with STAB1; this interaction may overcome SATB1-mediated repression of IL2 and IL2RA (interleukin) in T cells by binding to the same domain than HDAC1. Interacts (when acetylated) with human CDK13, thereby increasing HIV-1 mRNA splicing and promoting the production of the doubly spliced HIV-1 protein Nef. Interacts with host TBP; this interaction modulates the activity of transcriptional pre-initiation complex. Interacts with host RELA. Interacts with host PLSCR1; this interaction negatively regulates Tat transactivation activity by altering its subcellular distribution. Post-translationally, asymmetrical arginine methylation by host PRMT6 seems to diminish the transactivation capacity of Tat and affects the interaction with host CCNT1. Acetylation by EP300, CREBBP, GCN5L2/GCN5 and PCAF regulates the transactivation activity of Tat. EP300-mediated acetylation of Lys-50 promotes dissociation of Tat from the TAR RNA through the competitive binding to PCAF's bromodomain. In addition, the non-acetylated Tat's N-terminus can also interact with PCAF. PCAF-mediated acetylation of Lys-28 enhances Tat's binding to CCNT1. Lys-50 is deacetylated by SIRT1. In terms of processing, polyubiquitination by host MDM2 does not target Tat to degradation, but activates its transactivation function and fosters interaction with CCNT1 and TAR RNA. Post-translationally, phosphorylated by EIF2AK2 on serine and threonine residues adjacent to the basic region important for TAR RNA binding and function. Phosphorylation of Tat by EIF2AK2 is dependent on the prior activation of EIF2AK2 by dsRNA.

Its subcellular location is the host nucleus. It localises to the host nucleolus. It is found in the host cytoplasm. The protein localises to the secreted. Transcriptional activator that increases RNA Pol II processivity, thereby increasing the level of full-length viral transcripts. Recognizes a hairpin structure at the 5'-LTR of the nascent viral mRNAs referred to as the transactivation responsive RNA element (TAR) and recruits the cyclin T1-CDK9 complex (P-TEFb complex) that will in turn hyperphosphorylate the RNA polymerase II to allow efficient elongation. The CDK9 component of P-TEFb and other Tat-activated kinases hyperphosphorylate the C-terminus of RNA Pol II that becomes stabilized and much more processive. Other factors such as HTATSF1/Tat-SF1, SUPT5H/SPT5, and HTATIP2 are also important for Tat's function. Besides its effect on RNA Pol II processivity, Tat induces chromatin remodeling of proviral genes by recruiting the histone acetyltransferases (HATs) CREBBP, EP300 and PCAF to the chromatin. This also contributes to the increase in proviral transcription rate, especially when the provirus integrates in transcriptionally silent region of the host genome. To ensure maximal activation of the LTR, Tat mediates nuclear translocation of NF-kappa-B by interacting with host RELA. Through its interaction with host TBP, Tat may also modulate transcription initiation. Tat can reactivate a latently infected cell by penetrating in it and transactivating its LTR promoter. In the cytoplasm, Tat is thought to act as a translational activator of HIV-1 mRNAs. Its function is as follows. Extracellular circulating Tat can be endocytosed by surrounding uninfected cells via the binding to several surface receptors such as CD26, CXCR4, heparan sulfate proteoglycans (HSPG) or LDLR. Neurons are rarely infected, but they internalize Tat via their LDLR. Through its interaction with nuclear HATs, Tat is potentially able to control the acetylation-dependent cellular gene expression. Modulates the expression of many cellular genes involved in cell survival, proliferation or in coding for cytokines or cytokine receptors. Tat plays a role in T-cell and neurons apoptosis. Tat induced neurotoxicity and apoptosis probably contribute to neuroAIDS. Circulating Tat also acts as a chemokine-like and/or growth factor-like molecule that binds to specific receptors on the surface of the cells, affecting many cellular pathways. In the vascular system, Tat binds to ITGAV/ITGB3 and ITGA5/ITGB1 integrins dimers at the surface of endothelial cells and competes with bFGF for heparin-binding sites, leading to an excess of soluble bFGF. This is Protein Tat from Human immunodeficiency virus type 1 group N (isolate YBF106) (HIV-1).